The following is a 191-amino-acid chain: Ribosomal RNA small subunit methyltransferase G (191 aa).

S-adenosyl-L-methionine contacts are provided by residues Gly62, Phe67, 111 to 112, and Arg124; that span reads IE.

This sequence belongs to the methyltransferase superfamily. RNA methyltransferase RsmG family.

The protein resides in the cytoplasm. It carries out the reaction guanosine(527) in 16S rRNA + S-adenosyl-L-methionine = N(7)-methylguanosine(527) in 16S rRNA + S-adenosyl-L-homocysteine. Functionally, specifically methylates the N7 position of guanine in position 527 of 16S rRNA. This chain is Ribosomal RNA small subunit methyltransferase G, found in Rickettsia prowazekii (strain Madrid E).